We begin with the raw amino-acid sequence, 78 residues long: Putative membrane protein insertion efficiency factor (78 aa).

Belongs to the UPF0161 family.

Its subcellular location is the cell membrane. Its function is as follows. Could be involved in insertion of integral membrane proteins into the membrane. This chain is Putative membrane protein insertion efficiency factor, found in Bacillus cereus (strain G9842).